We begin with the raw amino-acid sequence, 303 residues long: MSVWAFAFFSLFLSLSVRGSAEQCGQQAGDALCPGGLCCSSYGWCGTTADYCGDGCQSQCDGGGGGGGGGGGGGGGGGGGGDGYLSDIIPESMFDDMLKYRNDPQCPAVGFYTYNAFISAAKEFPDFGNTGDDLMRKREIAAFLGQTSHETNGWWPAAQGDQYDWGYCHMNYNYGLCGDDLNLPLLQEPELVETDPFIAFKTALWFWMTPQSPKPSCHAVITESWTPSAADSEAGRVPGYGVITNIINGGIECGQGGPNNANENRIGFYKTYCDSLGTTYGSNLDCYQQRPFGYGLLGLKDTM.

Residues 1–21 (MSVWAFAFFSLFLSLSVRGSA) form the signal peptide. One can recognise a Chitin-binding type-1 domain in the interval 22-62 (EQCGQQAGDALCPGGLCCSSYGWCGTTADYCGDGCQSQCDG). Cystine bridges form between Cys-24/Cys-39, Cys-33/Cys-45, Cys-38/Cys-52, and Cys-56/Cys-60. The tract at residues 82–303 (DGYLSDIIPE…YGLLGLKDTM (222 aa)) is chitinase. Glu-150 (proton donor) is an active-site residue. Residues Cys-253 and Cys-286 are joined by a disulfide bond.

This sequence belongs to the glycosyl hydrolase 19 family. Chitinase class I subfamily.

It carries out the reaction Random endo-hydrolysis of N-acetyl-beta-D-glucosaminide (1-&gt;4)-beta-linkages in chitin and chitodextrins.. Defense against chitin-containing fungal pathogens. This is Acidic endochitinase WIN6.2B from Populus trichocarpa (Western balsam poplar).